The primary structure comprises 633 residues: ATP-dependent RNA helicase mss116, mitochondrial (633 aa).

The N-terminal 32 residues, 1–32 (MKTGRTRPLRVFDILVPPWPPTVPHRIKLPRG), are a transit peptide targeting the mitochondrion. A Q motif motif is present at residues 38–66 (EFYSAITRNWNKLKGLKNCWQIWKDVQEI). One can recognise a Helicase ATP-binding domain in the interval 70–248 (IRKYQGESTV…TAEKLSNIQT (179 aa)). Position 83-90 (83-90 (PGNNDGAH)) interacts with ATP. Positions 195-198 (RPLE) match the DEAD box motif. The 168-residue stretch at 262-429 (FLADVKRILQ…NVDLVIQVGL (168 aa)) folds into the Helicase C-terminal domain. The segment at 567-633 (FNYATGNDLN…GGRGGKPRAA (67 aa)) is disordered.

This sequence belongs to the DEAD box helicase family. DDX18/HAS1 subfamily.

The protein localises to the mitochondrion matrix. The enzyme catalyses ATP + H2O = ADP + phosphate + H(+). ATP-dependent RNA helicase required for mitochondrial splicing of group I and II introns. Also required for efficient mitochondrial translation. The chain is ATP-dependent RNA helicase mss116, mitochondrial (mss116) from Aspergillus oryzae (strain ATCC 42149 / RIB 40) (Yellow koji mold).